We begin with the raw amino-acid sequence, 243 residues long: UPF0758 protein alr2351 (243 aa).

The 123-residue stretch at 113 to 235 folds into the MPN domain; it reads PIDSPVAAVA…HQSLREITTL (123 aa). The Zn(2+) site is built by His184, His186, and Asp197. Residues 184-197 carry the JAMM motif motif; sequence HNHPSGNVEPSPED.

It belongs to the UPF0758 family.

The polypeptide is UPF0758 protein alr2351 (Nostoc sp. (strain PCC 7120 / SAG 25.82 / UTEX 2576)).